The following is a 178-amino-acid chain: Large ribosomal subunit protein bL25 (178 aa).

The protein belongs to the bacterial ribosomal protein bL25 family. CTC subfamily. In terms of assembly, part of the 50S ribosomal subunit; part of the 5S rRNA/L5/L18/L25 subcomplex. Contacts the 5S rRNA. Binds to the 5S rRNA independently of L5 and L18.

Its function is as follows. This is one of the proteins that binds to the 5S RNA in the ribosome where it forms part of the central protuberance. This is Large ribosomal subunit protein bL25 from Campylobacter lari (strain RM2100 / D67 / ATCC BAA-1060).